The sequence spans 349 residues: Adenine deaminase (349 aa).

Zn(2+) contacts are provided by His-24, His-26, and His-204. Glu-207 (proton donor) is an active-site residue. Zn(2+) is bound at residue Asp-285. Asp-286 is a substrate binding site.

Belongs to the metallo-dependent hydrolases superfamily. Adenosine and AMP deaminases family. Adenine deaminase type 2 subfamily. Zn(2+) serves as cofactor.

The enzyme catalyses adenine + H2O + H(+) = hypoxanthine + NH4(+). Catalyzes the hydrolytic deamination of adenine to hypoxanthine. Plays an important role in the purine salvage pathway and in nitrogen catabolism. This is Adenine deaminase from Trichlorobacter lovleyi (strain ATCC BAA-1151 / DSM 17278 / SZ) (Geobacter lovleyi).